The primary structure comprises 348 residues: NADH-quinone oxidoreductase subunit H (348 aa).

9 helical membrane passes run 13–33, 50–70, 82–102, 115–135, 161–181, 198–218, 258–278, 285–305, and 321–341; these read LIMVGQSLLLLVCLLVAIAFL, PNVVGPFGLFQSFADLLKFIL, AVFLLAPLVAVTLALATYAVI, VGILYIFAISSLEVYGIIMGG, IGLVIVTVLLCVGSLNLTDIV, FLDWHWLSLFPMFIVFFISGL, AIVLICCLTTILFLGGWLPIV, WVPGIVWFALKGCMVFFMIAL, and LGWKVFLPLSLAMVVIVAFVL.

It belongs to the complex I subunit 1 family. NDH-1 is composed of 14 different subunits. Subunits NuoA, H, J, K, L, M, N constitute the membrane sector of the complex.

The protein localises to the cell inner membrane. The catalysed reaction is a quinone + NADH + 5 H(+)(in) = a quinol + NAD(+) + 4 H(+)(out). In terms of biological role, NDH-1 shuttles electrons from NADH, via FMN and iron-sulfur (Fe-S) centers, to quinones in the respiratory chain. The immediate electron acceptor for the enzyme in this species is believed to be ubiquinone. Couples the redox reaction to proton translocation (for every two electrons transferred, four hydrogen ions are translocated across the cytoplasmic membrane), and thus conserves the redox energy in a proton gradient. This subunit may bind ubiquinone. In Agrobacterium fabrum (strain C58 / ATCC 33970) (Agrobacterium tumefaciens (strain C58)), this protein is NADH-quinone oxidoreductase subunit H.